The following is a 269-amino-acid chain: UPF0328 protein ECU03_0020 (269 aa).

Belongs to the UPF0328 family.

The sequence is that of UPF0328 protein ECU03_0020 from Encephalitozoon cuniculi (strain GB-M1) (Microsporidian parasite).